The chain runs to 444 residues: Na(+)/H(+) antiporter NhaA 2 (444 aa).

11 consecutive transmembrane segments (helical) span residues F21–F41, F64–L84, A102–L122, G131–G151, V160–F180, E185–I205, H212–I232, A307–V327, L342–L362, W377–V397, and I413–N433.

It belongs to the NhaA Na(+)/H(+) (TC 2.A.33) antiporter family.

It is found in the cell inner membrane. The catalysed reaction is Na(+)(in) + 2 H(+)(out) = Na(+)(out) + 2 H(+)(in). Its function is as follows. Na(+)/H(+) antiporter that extrudes sodium in exchange for external protons. This is Na(+)/H(+) antiporter NhaA 2 from Helicobacter hepaticus (strain ATCC 51449 / 3B1).